The sequence spans 466 residues: Ribosomal protein uS12 methylthiotransferase RimO (466 aa).

Residues 16-127 form the MTTase N-terminal domain; that stretch reads PKVAFAHLGC…IVDVLQRVEA (112 aa). Cys-25, Cys-61, Cys-90, Cys-165, Cys-169, and Cys-172 together coordinate [4Fe-4S] cluster. Residues 151 to 380 form the Radical SAM core domain; that stretch reads TTDQAVAYLK…MALQQPIAAE (230 aa). Residues 383-454 form the TRAM domain; it reads QRWVGKTVDV…IYDLTGHIVG (72 aa).

The protein belongs to the methylthiotransferase family. RimO subfamily. [4Fe-4S] cluster is required as a cofactor.

The protein localises to the cytoplasm. The enzyme catalyses L-aspartate(89)-[ribosomal protein uS12]-hydrogen + (sulfur carrier)-SH + AH2 + 2 S-adenosyl-L-methionine = 3-methylsulfanyl-L-aspartate(89)-[ribosomal protein uS12]-hydrogen + (sulfur carrier)-H + 5'-deoxyadenosine + L-methionine + A + S-adenosyl-L-homocysteine + 2 H(+). Catalyzes the methylthiolation of an aspartic acid residue of ribosomal protein uS12. The polypeptide is Ribosomal protein uS12 methylthiotransferase RimO (Synechococcus sp. (strain CC9902)).